Here is a 540-residue protein sequence, read N- to C-terminus: Sterol O-acyltransferase 1 (540 aa).

The segment at 1–20 (MSLRNRLSKSGENPEQDEAQ) is disordered. Residues 1–128 (MSLRNRLSKS…LDELFEVDHI (128 aa)) lie on the Cytoplasmic side of the membrane. Position 2 is a phosphoserine (S2). H127 contributes to the cholesterol binding site. The chain crosses the membrane as a helical span at residues 129–150 (RTIYHMFIALLILFVLSTIVVD). At 151–170 (YIDEGRLVLEFNLLAYAFGK) the chain is on the lumenal side. The chain crosses the membrane as a helical span at residues 171 to 196 (FPTVIWTWWAMFLSTLSIPYFLFQRW). At 197–208 (AHGYSKSSHPLI) the chain is on the cytoplasmic side. Residues 209 to 234 (YSLVHGLLFLVFQLGVLGFVPTYVVL) traverse the membrane as a helical segment. Over 235-242 (AYTLPPAS) the chain is Lumenal. The chain crosses the membrane as a helical span at residues 243–266 (RFILILEQIRLIMKAHSFVRENIP). The Cytoplasmic segment spans residues 267–309 (RVLNAAKEKSSKDPLPTVNQYLYFLFAPTLIYRDNYPRTPTVR). A helical transmembrane segment spans residues 310–342 (WGYVAMQFLQVFGCLFYVYYIFERLCAPLFRNI). At 343–359 (KQEPFSARVLVLCVFNS) the chain is on the lumenal side. Residues 360 to 385 (ILPGVLILFLSFFAFLHCWLNAFAEM) form a helical membrane-spanning segment. Residues 386–433 (LRFGDRMFYKDWWNSTSYSNYYRTWNVVVHDWLYYYVYKDLLWFFSKR) are Cytoplasmic-facing. The FYXDWWN motif signature appears at 393 to 399 (FYKDWWN). Positions 405, 408, 411, 415, 423, 435, and 446 each coordinate an acyl-CoA. Residues 434 to 458 (FKSAAMLAVFALSAVVHEYALAICL) form a helical membrane-spanning segment. H450 is a catalytic residue. Residues 459 to 464 (SYFYPV) lie on the Lumenal side of the membrane. The chain crosses the membrane as a helical span at residues 465-480 (LFVLFMFFGMAFNFIV). Residues 481 to 486 (NDSRKR) are Cytoplasmic-facing. The chain crosses the membrane as a helical span at residues 487 to 518 (PIWNIMVWASLFLGYGLILCFYSQEWYARQHC). The cysteines at positions 518 and 536 are disulfide-linked. The Lumenal portion of the chain corresponds to 519–540 (PLKNPTFLDYVRPRTWTCRYVF).

The protein belongs to the membrane-bound acyltransferase family. Sterol o-acyltransferase subfamily. May form homo- or heterodimers. Interacts with UBIAD1.

The protein localises to the endoplasmic reticulum membrane. It carries out the reaction a sterol + a long-chain fatty acyl-CoA = a long-chain 3-hydroxysterol ester + CoA. The enzyme catalyses cholesterol + an acyl-CoA = a cholesterol ester + CoA. It catalyses the reaction cholesterol + (9Z)-octadecenoyl-CoA = cholesteryl (9Z-octadecenoate) + CoA. The catalysed reaction is cholesterol + hexadecanoyl-CoA = cholesteryl hexadecanoate + CoA. It carries out the reaction octadecanoyl-CoA + cholesterol = cholesteryl octadecanoate + CoA. The enzyme catalyses (9Z,12Z)-octadecadienoyl-CoA + cholesterol = cholesteryl (9Z,12Z)-octadecadienoate + CoA. It catalyses the reaction (5Z,8Z,11Z,14Z)-eicosatetraenoyl-CoA + cholesterol = cholesteryl (5Z,8Z,11Z,14Z)-eicosatetraenoate + CoA. The catalysed reaction is (9Z)-hexadecenoyl-CoA + cholesterol = cholesteryl (9Z)-hexadecenoate + CoA. It carries out the reaction (11Z)-octadecenoyl-CoA + cholesterol = cholesteryl (11Z)-octadecenoate + CoA. The enzyme catalyses (7Z)-octadecenoyl-CoA + cholesterol = cholesteryl (7Z)-octadecenoate + CoA. Catalyzes the formation of fatty acid-cholesterol esters, which are less soluble in membranes than cholesterol. Plays a role in lipoprotein assembly and dietary cholesterol absorption. Preferentially utilizes oleoyl-CoA ((9Z)-octadecenoyl-CoA) as a substrate: shows a higher activity towards an acyl-CoA substrate with a double bond at the delta-9 position (9Z) than towards saturated acyl-CoA or an unsaturated acyl-CoA with a double bond at the delta-7 (7Z) or delta-11 (11Z) positions. The chain is Sterol O-acyltransferase 1 from Mus musculus (Mouse).